The sequence spans 84 residues: Phosphoribosylformylglycinamidine synthase subunit PurS (84 aa).

The protein belongs to the PurS family. In terms of assembly, homodimer. Part of the FGAM synthase complex composed of 1 PurL, 1 PurQ and 2 PurS subunits.

The protein localises to the cytoplasm. The catalysed reaction is N(2)-formyl-N(1)-(5-phospho-beta-D-ribosyl)glycinamide + L-glutamine + ATP + H2O = 2-formamido-N(1)-(5-O-phospho-beta-D-ribosyl)acetamidine + L-glutamate + ADP + phosphate + H(+). It participates in purine metabolism; IMP biosynthesis via de novo pathway; 5-amino-1-(5-phospho-D-ribosyl)imidazole from N(2)-formyl-N(1)-(5-phospho-D-ribosyl)glycinamide: step 1/2. Part of the phosphoribosylformylglycinamidine synthase complex involved in the purines biosynthetic pathway. Catalyzes the ATP-dependent conversion of formylglycinamide ribonucleotide (FGAR) and glutamine to yield formylglycinamidine ribonucleotide (FGAM) and glutamate. The FGAM synthase complex is composed of three subunits. PurQ produces an ammonia molecule by converting glutamine to glutamate. PurL transfers the ammonia molecule to FGAR to form FGAM in an ATP-dependent manner. PurS interacts with PurQ and PurL and is thought to assist in the transfer of the ammonia molecule from PurQ to PurL. The chain is Phosphoribosylformylglycinamidine synthase subunit PurS from Methanothermobacter thermautotrophicus (strain ATCC 29096 / DSM 1053 / JCM 10044 / NBRC 100330 / Delta H) (Methanobacterium thermoautotrophicum).